Consider the following 459-residue polypeptide: tRNA(Ile)-lysidine synthase (459 aa).

38–43 (SGGMDS) is an ATP binding site.

It belongs to the tRNA(Ile)-lysidine synthase family.

The protein resides in the cytoplasm. The catalysed reaction is cytidine(34) in tRNA(Ile2) + L-lysine + ATP = lysidine(34) in tRNA(Ile2) + AMP + diphosphate + H(+). Ligates lysine onto the cytidine present at position 34 of the AUA codon-specific tRNA(Ile) that contains the anticodon CAU, in an ATP-dependent manner. Cytidine is converted to lysidine, thus changing the amino acid specificity of the tRNA from methionine to isoleucine. This is tRNA(Ile)-lysidine synthase from Acinetobacter baylyi (strain ATCC 33305 / BD413 / ADP1).